A 324-amino-acid polypeptide reads, in one-letter code: Polycomb complex protein BMI-1-B (324 aa).

Residues 18–57 (CVLCGGYFIDATTIVECLHSFCKMCIVRYLETSKYCPICD) form an RING-type zinc finger. Positions 81-95 (KLVPGLFKNEMKRRR) match the Nuclear localization signal motif. Positions 232 to 324 (IKLSSPRNDM…TSHNGSNSLG (93 aa)) are disordered. Residues 256–279 (DKPNSPSIVAAPSTSSSMPSPNTP) are compositionally biased toward low complexity. Composition is skewed to polar residues over residues 280 to 295 (VQST…TING) and 303 to 324 (NGQT…NSLG).

In terms of assembly, component of a PRC1-like complex. Homodimer. Interacts with cbx2.

It is found in the nucleus. Its function is as follows. Component of a Polycomb group (PcG) multiprotein PRC1-like complex, a complex class required to maintain the transcriptionally repressive state of many genes, including Hox genes, throughout development. PcG PRC1 complex acts via chromatin remodeling and modification of histones; it mediates monoubiquitination of histone H2A 'Lys-119', rendering chromatin heritably changed in its expressibility. In the PRC1 complex, it is required to stimulate the E3 ubiquitin-protein ligase activity of rnf2. The polypeptide is Polycomb complex protein BMI-1-B (bmi1b) (Danio rerio (Zebrafish)).